The primary structure comprises 569 residues: Potassium-transporting ATPase potassium-binding subunit (569 aa).

Helical transmembrane passes span 5–25 (GWAE…PLGV), 65–85 (GYAG…YAVL), 135–155 (LVLT…AAAL), 179–199 (LYVL…LGLP), 254–274 (LTNL…FFAF), 286–306 (ALVI…YWTE), 383–403 (GIAV…LMVG), 422–442 (LLTV…AAVL), 489–509 (MGVA…AMAG), and 528–548 (GGLF…LQFF).

Belongs to the KdpA family. As to quaternary structure, the system is composed of three essential subunits: KdpA, KdpB and KdpC.

Its subcellular location is the cell inner membrane. Functionally, part of the high-affinity ATP-driven potassium transport (or Kdp) system, which catalyzes the hydrolysis of ATP coupled with the electrogenic transport of potassium into the cytoplasm. This subunit binds the periplasmic potassium ions and delivers the ions to the membrane domain of KdpB through an intramembrane tunnel. This Caulobacter sp. (strain K31) protein is Potassium-transporting ATPase potassium-binding subunit.